Here is a 987-residue protein sequence, read N- to C-terminus: Ephrin type-B receptor 4 (987 aa).

The first 15 residues, 1 to 15 (MELRVLLCWASLAAA), serve as a signal peptide directing secretion. At 16–539 (LEETLLNTKL…ESEGWREQLA (524 aa)) the chain is on the extracellular side. The Eph LBD domain occupies 17 to 202 (EETLLNTKLE…FYKKCAQLTV (186 aa)). 2 disulfides stabilise this stretch: Cys61–Cys184 and Cys97–Cys107. 3 N-linked (GlcNAc...) asparagine glycosylation sites follow: Asn203, Asn335, and Asn426. 2 consecutive Fibronectin type-III domains span residues 323–432 (PPSA…TDRE) and 436–529 (AVSD…TQLD). Residues 540 to 560 (LIAGTAVVGVVLVLVVIVVAV) traverse the membrane as a helical segment. The Cytoplasmic portion of the chain corresponds to 561–987 (LCLRKQSNGR…GGTGGPAPQY (427 aa)). Residues 615 to 899 (VKIEEVIGAG…ENGGASHPLL (285 aa)) form the Protein kinase domain. ATP-binding positions include 621–629 (IGAGEFGEV) and Lys647. Asp740 functions as the Proton acceptor in the catalytic mechanism. Phosphoserine occurs at positions 769, 770, 911, and 943. The region spanning 907–971 (SAFGSVGEWL…LASVQHMKSQ (65 aa)) is the SAM domain. The tract at residues 965 to 987 (VQHMKSQAKPGTPGGTGGPAPQY) is disordered. Residue Thr976 is modified to Phosphothreonine. Residues 976-987 (TPGGTGGPAPQY) are compositionally biased toward gly residues. The PDZ-binding motif lies at 985–987 (PQY). A Phosphotyrosine modification is found at Tyr987.

It belongs to the protein kinase superfamily. Tyr protein kinase family. Ephrin receptor subfamily. Heterotetramer upon binding of the ligand. The heterotetramer is composed of an ephrin dimer and a receptor dimer. Oligomerization is probably required to induce biological responses. Interacts with RASA1; the interaction depends on EPHB4 tyrosine-phosphorylation. Phosphorylated; autophosphorylation is stimulated by EFNB2. In terms of tissue distribution, abundantly expressed in placenta but also detected in kidney, liver, lung, pancreas, skeletal muscle and heart. Expressed in primitive and myeloid, but not lymphoid, hematopoietic cells. Also observed in cell lines derived from liver, breast, colon, lung, melanocyte and cervix.

The protein resides in the cell membrane. The catalysed reaction is L-tyrosyl-[protein] + ATP = O-phospho-L-tyrosyl-[protein] + ADP + H(+). Its function is as follows. Receptor tyrosine kinase which binds promiscuously transmembrane ephrin-B family ligands residing on adjacent cells, leading to contact-dependent bidirectional signaling into neighboring cells. The signaling pathway downstream of the receptor is referred to as forward signaling while the signaling pathway downstream of the ephrin ligand is referred to as reverse signaling. Together with its cognate ligand/functional ligand EFNB2 it is involved in the regulation of cell adhesion and migration, and plays a central role in heart morphogenesis, angiogenesis and blood vessel remodeling and permeability. EPHB4-mediated forward signaling controls cellular repulsion and segregation from EFNB2-expressing cells. The chain is Ephrin type-B receptor 4 (EPHB4) from Homo sapiens (Human).